A 129-amino-acid polypeptide reads, in one-letter code: ATP synthase epsilon chain (129 aa).

The protein belongs to the ATPase epsilon chain family. F-type ATPases have 2 components, CF(1) - the catalytic core - and CF(0) - the membrane proton channel. CF(1) has five subunits: alpha(3), beta(3), gamma(1), delta(1), epsilon(1). CF(0) has three main subunits: a, b and c.

The protein localises to the cell inner membrane. Its function is as follows. Produces ATP from ADP in the presence of a proton gradient across the membrane. In Campylobacter concisus (strain 13826), this protein is ATP synthase epsilon chain.